The chain runs to 456 residues: Putative E3 ubiquitin-protein ligase XBAT31 (456 aa).

ANK repeat units lie at residues 45 to 74, 78 to 107, 112 to 141, 157 to 186, and 194 to 224; these read DRHSVLHVAAANGQIEILSLLLERFTNPDL, HKQTPLMLAAMYGRISCVKKLAEVGANILM, NRRTCLHYAAYYGHANCVQAILSAAQSSPV, KGATPLHLAARQRRPECVNVLLDSGSLVCA, and PGSTPLHLAARSGSIDCVRKLLAWGADRLQR. The RING-type zinc finger occupies 319-368; it reads CCICFEQVCTIEVKDCGHQMCAQCTLALCCHNKPNPTTSTVTPPVCPFCR.

It catalyses the reaction S-ubiquitinyl-[E2 ubiquitin-conjugating enzyme]-L-cysteine + [acceptor protein]-L-lysine = [E2 ubiquitin-conjugating enzyme]-L-cysteine + N(6)-ubiquitinyl-[acceptor protein]-L-lysine.. The protein operates within protein modification; protein ubiquitination. Its function is as follows. No E3 ubiquitin-protein ligase activity observed when associated with the E2 enzyme UBC8 in vitro. The chain is Putative E3 ubiquitin-protein ligase XBAT31 (XBAT31) from Arabidopsis thaliana (Mouse-ear cress).